The following is a 132-amino-acid chain: Small ribosomal subunit protein uS8 (132 aa).

This sequence belongs to the universal ribosomal protein uS8 family. As to quaternary structure, part of the 30S ribosomal subunit. Contacts proteins S5 and S12.

Functionally, one of the primary rRNA binding proteins, it binds directly to 16S rRNA central domain where it helps coordinate assembly of the platform of the 30S subunit. This is Small ribosomal subunit protein uS8 from Rhodopseudomonas palustris (strain BisB18).